Reading from the N-terminus, the 393-residue chain is NAD(P)H-quinone oxidoreductase subunit H, chloroplastic (393 aa).

Belongs to the complex I 49 kDa subunit family. In terms of assembly, NDH is composed of at least 16 different subunits, 5 of which are encoded in the nucleus.

The protein localises to the plastid. The protein resides in the chloroplast thylakoid membrane. It catalyses the reaction a plastoquinone + NADH + (n+1) H(+)(in) = a plastoquinol + NAD(+) + n H(+)(out). It carries out the reaction a plastoquinone + NADPH + (n+1) H(+)(in) = a plastoquinol + NADP(+) + n H(+)(out). NDH shuttles electrons from NAD(P)H:plastoquinone, via FMN and iron-sulfur (Fe-S) centers, to quinones in the photosynthetic chain and possibly in a chloroplast respiratory chain. The immediate electron acceptor for the enzyme in this species is believed to be plastoquinone. Couples the redox reaction to proton translocation, and thus conserves the redox energy in a proton gradient. The polypeptide is NAD(P)H-quinone oxidoreductase subunit H, chloroplastic (Lactuca sativa (Garden lettuce)).